A 122-amino-acid chain; its full sequence is Large ribosomal subunit protein uL18 (122 aa).

This sequence belongs to the universal ribosomal protein uL18 family. In terms of assembly, part of the 50S ribosomal subunit; part of the 5S rRNA/L5/L18/L25 subcomplex. Contacts the 5S and 23S rRNAs.

Its function is as follows. This is one of the proteins that bind and probably mediate the attachment of the 5S RNA into the large ribosomal subunit, where it forms part of the central protuberance. The polypeptide is Large ribosomal subunit protein uL18 (Mycobacterium leprae (strain TN)).